A 539-amino-acid polypeptide reads, in one-letter code: Bifunctional purine biosynthesis protein PurH (539 aa).

An MGS-like domain is found at 8 to 159 (FPIPDLHRVR…KNYAYTGVVT (152 aa)).

It belongs to the PurH family.

The catalysed reaction is (6R)-10-formyltetrahydrofolate + 5-amino-1-(5-phospho-beta-D-ribosyl)imidazole-4-carboxamide = 5-formamido-1-(5-phospho-D-ribosyl)imidazole-4-carboxamide + (6S)-5,6,7,8-tetrahydrofolate. It carries out the reaction IMP + H2O = 5-formamido-1-(5-phospho-D-ribosyl)imidazole-4-carboxamide. Its pathway is purine metabolism; IMP biosynthesis via de novo pathway; 5-formamido-1-(5-phospho-D-ribosyl)imidazole-4-carboxamide from 5-amino-1-(5-phospho-D-ribosyl)imidazole-4-carboxamide (10-formyl THF route): step 1/1. It functions in the pathway purine metabolism; IMP biosynthesis via de novo pathway; IMP from 5-formamido-1-(5-phospho-D-ribosyl)imidazole-4-carboxamide: step 1/1. The chain is Bifunctional purine biosynthesis protein PurH from Bartonella tribocorum (strain CIP 105476 / IBS 506).